The sequence spans 231 residues: MKQYNDLFKIIHREGYIFIASFALVSFLLASFNEKLGCIGCIATAWCIYFFRNPDRFVPISDDLVISPADGIIQEIKEALPPPELGLGDVEMIRVSIFLNIFNVHVNRIPANGKILALHYNPGKFFNASLDKASIYNERQSVLMETAQGQKIVFVQIAGLIARRIVCDLEEGNEVKTGERYGIIRFGSRVDVYLPLKTALLVSKGQTAIGGETIIADFGRKKTTEFKFDRK.

Residue Ser-188 is the Schiff-base intermediate with substrate; via pyruvic acid of the active site. At Ser-188 the chain carries Pyruvic acid (Ser); by autocatalysis.

This sequence belongs to the phosphatidylserine decarboxylase family. PSD-A subfamily. Heterodimer of a large membrane-associated beta subunit and a small pyruvoyl-containing alpha subunit. Pyruvate is required as a cofactor. Post-translationally, is synthesized initially as an inactive proenzyme. Formation of the active enzyme involves a self-maturation process in which the active site pyruvoyl group is generated from an internal serine residue via an autocatalytic post-translational modification. Two non-identical subunits are generated from the proenzyme in this reaction, and the pyruvate is formed at the N-terminus of the alpha chain, which is derived from the carboxyl end of the proenzyme. The post-translation cleavage follows an unusual pathway, termed non-hydrolytic serinolysis, in which the side chain hydroxyl group of the serine supplies its oxygen atom to form the C-terminus of the beta chain, while the remainder of the serine residue undergoes an oxidative deamination to produce ammonia and the pyruvoyl prosthetic group on the alpha chain.

The protein localises to the cell membrane. It catalyses the reaction a 1,2-diacyl-sn-glycero-3-phospho-L-serine + H(+) = a 1,2-diacyl-sn-glycero-3-phosphoethanolamine + CO2. It functions in the pathway phospholipid metabolism; phosphatidylethanolamine biosynthesis; phosphatidylethanolamine from CDP-diacylglycerol: step 2/2. Catalyzes the formation of phosphatidylethanolamine (PtdEtn) from phosphatidylserine (PtdSer). This Rickettsia peacockii (strain Rustic) protein is Phosphatidylserine decarboxylase proenzyme.